Reading from the N-terminus, the 234-residue chain is Protein spitz (234 aa).

Positions 1–28 (MHSTMSVQHGLVALVLIGCLAHPWHVEA) are cleaved as a signal peptide. Over 29-143 (CSSRTVPKPR…RPRPMLEKAS (115 aa)) the chain is Lumenal. Residues 33–71 (TVPKPRSSISSSMSGTALPPTQAPVTSSTTMRTTTTTTP) form a disordered region. Over residues 56–71 (PVTSSTTMRTTTTTTP) the composition is skewed to low complexity. Asparagine 74 carries N-linked (GlcNAc...) asparagine glycosylation. The region spanning 78 to 122 (PTYKCPETFDAWYCLNDAHCFAVKIADLPVYSCECAIGFMGQRCE) is the EGF-like domain. 3 disulfides stabilise this stretch: cysteine 82-cysteine 97, cysteine 91-cysteine 110, and cysteine 112-cysteine 121. A helical membrane pass occupies residues 144–164 (IASGAMCALVFMLFVCLAFYL). Topologically, residues 165-234 (RFEQRAAKKA…SFAIRRSNKL (70 aa)) are cytoplasmic.

In terms of assembly, interacts with Star via the lumenal domain. In terms of processing, proteolytic processing by Rhomboid occurs in the Golgi. Cleavage takes place within the transmembrane domain close to residue 144 and the active growth factor is released. Post-translationally, N-glycosylated and O-glycosylated. In terms of tissue distribution, expressed throughout the embryo.

It is found in the cell membrane. The protein resides in the endoplasmic reticulum membrane. The protein localises to the golgi apparatus membrane. Ligand for the EGF receptor (Gurken). Involved in a number of unrelated developmental choices, for example, dorsal-ventral axis formation, glial migration, sensory organ determination, and muscle development. It is required for photoreceptor determination. The polypeptide is Protein spitz (spi) (Drosophila melanogaster (Fruit fly)).